The following is a 447-amino-acid chain: Alpha-1,6-mannosyl-glycoprotein 2-beta-N-acetylglucosaminyltransferase (447 aa).

Topologically, residues 1–9 (MRFRIYKRK) are cytoplasmic. A helical; Signal-anchor for type II membrane protein transmembrane segment spans residues 10–29 (VLILTLVVAACGFVLWSSNG). At 30 to 447 (RQRKNEALAP…ELCKSYRRLQ (418 aa)) the chain is on the lumenal side. Residues asparagine 69 and asparagine 86 are each glycosylated (N-linked (GlcNAc...) asparagine). Substrate contacts are provided by residues 123 to 127 (QVHNR) and aspartate 154. Cysteines 196 and 210 form a disulfide. Substrate is bound at residue 229 to 233 (QTKHH). Aspartate 261 serves as a coordination point for Mn(2+). An intrachain disulfide couples cysteine 283 to cysteine 286. Position 298 (arginine 298) interacts with substrate. 3 disulfide bridges follow: cysteine 334–cysteine 357, cysteine 339–cysteine 440, and cysteine 378–cysteine 386. Histidine 374 provides a ligand contact to Mn(2+).

This sequence belongs to the glycosyltransferase 16 (GT16) protein family. In terms of assembly, homodimer. The cofactor is Mn(2+).

Its subcellular location is the golgi apparatus membrane. It carries out the reaction an N(4)-{beta-D-GlcNAc-(1-&gt;2)-alpha-D-Man-(1-&gt;3)-[alpha-D-Man-(1-&gt;6)]-beta-D-Man-(1-&gt;4)-beta-D-GlcNAc-(1-&gt;4)-beta-D-GlcNAc}-L-asparaginyl-[protein] + UDP-N-acetyl-alpha-D-glucosamine = N(4)-{beta-D-GlcNAc-(1-&gt;2)-alpha-D-Man-(1-&gt;3)-[beta-D-GlcNAc-(1-&gt;2)-alpha-D-Man-(1-&gt;6)]-beta-D-Man-(1-&gt;4)-beta-D-GlcNAc-(1-&gt;4)-beta-D-GlcNAc}-L-asparaginyl-[protein] + UDP + H(+). The protein operates within protein modification; protein glycosylation. In terms of biological role, plays an essential role in protein N-glycosylation. Catalyzes the transfer of N-acetylglucosamine (GlcNAc) onto the free terminal mannose moiety in the core structure of the nascent N-linked glycan chain, giving rise to the second branch in complex glycans. This Homo sapiens (Human) protein is Alpha-1,6-mannosyl-glycoprotein 2-beta-N-acetylglucosaminyltransferase (MGAT2).